An 875-amino-acid polypeptide reads, in one-letter code: Transcription factor tenR (875 aa).

The segment at residues 16–44 (CSECRRRKIRCDRGFPCGPCRKSLPALSC) is a DNA-binding region (zn(2)-C6 fungal-type). 3 disordered regions span residues 54–73 (AASA…PKVN), 136–172 (DHEK…GVNP), and 620–642 (PHED…TGSR). Composition is skewed to polar residues over residues 153–168 (PGST…SHSA) and 627–642 (SIQS…TGSR).

It is found in the nucleus. Transcription factor that positively regulates the expression of the genes that mediate the biosynthesis of tenellin-type 2-pyridones, iron-chelating compounds involved in iron stress tolerance, competition with the natural competitor fungus Metarhizium robertsii and insect hosts infection. The sequence is that of Transcription factor tenR from Beauveria bassiana (strain ARSEF 2860) (White muscardine disease fungus).